The following is a 151-amino-acid chain: Protein Turandot Z (151 aa).

The first 23 residues, 1-23, serve as a signal peptide directing secretion; the sequence is MSRLIHLSFVLALLACLTGTISA.

It belongs to the Turandot family.

Its subcellular location is the secreted. Its function is as follows. A humoral factor that may play a role in stress tolerance. The chain is Protein Turandot Z from Drosophila persimilis (Fruit fly).